The following is a 460-amino-acid chain: Solute carrier family 52, riboflavin transporter, member 3 (460 aa).

Residues 1-6 lie on the Cytoplasmic side of the membrane; sequence MAFLTH. The chain crosses the membrane as a helical span at residues 7–27; that stretch reads LLVCVFGMGSWVAINGLWVEL. Residues 28–37 lie on the Extracellular side of the membrane; it reads PLLVTELPEA. A helical transmembrane segment spans residues 38–58; that stretch reads WYLPSYLTVVIQLANIGPLLV. Over 59–71 the chain is Cytoplasmic; the sequence is TLMHRFRPGCLSE. The helical transmembrane segment at 72 to 92 threads the bilayer; it reads VPVIFLILCVGTAACILLAFL. The Extracellular portion of the chain corresponds to 93–105; the sequence is WNVTSWIQGGQHS. Asparagine 94 carries N-linked (GlcNAc...) asparagine glycosylation. A helical transmembrane segment spans residues 106-126; it reads VAFIVLTFFLALVDCTSSVTF. Topologically, residues 127 to 137 are cytoplasmic; sequence LPFMSQLPTYY. Residues 138-158 traverse the membrane as a helical segment; sequence LTTFFIGEGLSGLLPALVALV. At 159–211 the chain is on the extracellular side; that stretch reads QGSGITTCVNVTETPGTTLNTMETPITQGNLSPSLPSPSWHQESRYLAPRFSP. Asparagine 168 carries N-linked (GlcNAc...) asparagine glycosylation. A helical transmembrane segment spans residues 212–232; that stretch reads LLFFLLLSFLTGCCLVAFFLL. Residues 233-291 lie on the Cytoplasmic side of the membrane; that stretch reads QRQPWGRQGSIEDLLHSQVTLHSIRPRDTEDTSSLGAPVSSPGKGSVEASVASLRPAQL. Residues serine 242 and serine 266 each carry the phosphoserine modification. Residues 292–312 traverse the membrane as a helical segment; sequence AFIYSVVAFVNALTNGVLPSV. At 313–326 the chain is on the extracellular side; that stretch reads QTYSCLPYGPVAYH. The helical transmembrane segment at 327–347 threads the bilayer; that stretch reads LSATLSSVASPLACFLPIFLP. Topologically, residues 348-350 are cytoplasmic; the sequence is NRS. The helical transmembrane segment at 351–371 threads the bilayer; it reads LLFLGVLTVLGTGFGAYNMAM. The Extracellular segment spans residues 372 to 387; it reads AAMSPCPVLQGHWGGE. Cysteine 377 and cysteine 454 form a disulfide bridge. Residues 388–408 traverse the membrane as a helical segment; it reads VLIVLSWVLFAACLSYVKVML. Topologically, residues 409–418 are cytoplasmic; the sequence is GVILRDRSRS. The helical transmembrane segment at 419-439 threads the bilayer; that stretch reads ALLWCGAAVQLGSLIGALLMF. Topologically, residues 440–460 are extracellular; sequence PLVNVLKLFSSADYCSLDCSV.

The protein belongs to the riboflavin transporter family. As to expression, within the small intestine, it is particularly expressed in the jujenum and the ileum. Almost negligible expression in the stomach, duodenum, and large intestine.

It is found in the cell membrane. It carries out the reaction riboflavin(in) = riboflavin(out). In terms of biological role, plasma membrane transporter mediating the uptake by cells of the water soluble vitamin B2/riboflavin that plays a key role in biochemical oxidation-reduction reactions of the carbohydrate, lipid, and amino acid metabolism. The chain is Solute carrier family 52, riboflavin transporter, member 3 (Slc52a3) from Mus musculus (Mouse).